The chain runs to 299 residues: Bifunctional protein FolD (299 aa).

Residues 169-171 (GRS), Ser-194, and Ile-235 each bind NADP(+).

It belongs to the tetrahydrofolate dehydrogenase/cyclohydrolase family. As to quaternary structure, homodimer.

It catalyses the reaction (6R)-5,10-methylene-5,6,7,8-tetrahydrofolate + NADP(+) = (6R)-5,10-methenyltetrahydrofolate + NADPH. The catalysed reaction is (6R)-5,10-methenyltetrahydrofolate + H2O = (6R)-10-formyltetrahydrofolate + H(+). Its pathway is one-carbon metabolism; tetrahydrofolate interconversion. Functionally, catalyzes the oxidation of 5,10-methylenetetrahydrofolate to 5,10-methenyltetrahydrofolate and then the hydrolysis of 5,10-methenyltetrahydrofolate to 10-formyltetrahydrofolate. This Trichormus variabilis (strain ATCC 29413 / PCC 7937) (Anabaena variabilis) protein is Bifunctional protein FolD.